Reading from the N-terminus, the 347-residue chain is N-acetyl-gamma-glutamyl-phosphate reductase (347 aa).

The active site involves C152.

The protein belongs to the NAGSA dehydrogenase family. Type 1 subfamily.

It is found in the cytoplasm. It carries out the reaction N-acetyl-L-glutamate 5-semialdehyde + phosphate + NADP(+) = N-acetyl-L-glutamyl 5-phosphate + NADPH + H(+). The protein operates within amino-acid biosynthesis; L-arginine biosynthesis; N(2)-acetyl-L-ornithine from L-glutamate: step 3/4. Its function is as follows. Catalyzes the NADPH-dependent reduction of N-acetyl-5-glutamyl phosphate to yield N-acetyl-L-glutamate 5-semialdehyde. The chain is N-acetyl-gamma-glutamyl-phosphate reductase from Neisseria gonorrhoeae (strain ATCC 700825 / FA 1090).